A 322-amino-acid polypeptide reads, in one-letter code: Undecaprenyl-phosphate 4-deoxy-4-formamido-L-arabinose transferase (322 aa).

Over 1 to 235 the chain is Cytoplasmic; that stretch reads MFEIHPVKKV…TCLTTTPLRM (235 aa). A helical transmembrane segment spans residues 236–256; sequence LSLLGSIIAIGGFSIAVLLVI. Topologically, residues 257-269 are periplasmic; it reads LRLTFGPQWAAEG. Residues 270–290 form a helical membrane-spanning segment; sequence VFMLFAVLFTFIGAQFIGMGL. At 291–322 the chain is on the cytoplasmic side; that stretch reads LGEYIGRIYTDVRARPRYFVQQVIRPSSKENE.

Belongs to the glycosyltransferase 2 family.

It is found in the cell inner membrane. The enzyme catalyses UDP-4-deoxy-4-formamido-beta-L-arabinose + di-trans,octa-cis-undecaprenyl phosphate = 4-deoxy-4-formamido-alpha-L-arabinopyranosyl di-trans,octa-cis-undecaprenyl phosphate + UDP. It participates in glycolipid biosynthesis; 4-amino-4-deoxy-alpha-L-arabinose undecaprenyl phosphate biosynthesis; 4-amino-4-deoxy-alpha-L-arabinose undecaprenyl phosphate from UDP-4-deoxy-4-formamido-beta-L-arabinose and undecaprenyl phosphate: step 1/2. It functions in the pathway bacterial outer membrane biogenesis; lipopolysaccharide biosynthesis. In terms of biological role, catalyzes the transfer of 4-deoxy-4-formamido-L-arabinose from UDP to undecaprenyl phosphate. The modified arabinose is attached to lipid A and is required for resistance to polymyxin and cationic antimicrobial peptides. This is Undecaprenyl-phosphate 4-deoxy-4-formamido-L-arabinose transferase from Shigella dysenteriae serotype 1 (strain Sd197).